The following is a 189-amino-acid chain: UPF0301 protein Cgl3084/cg3414 (189 aa).

It belongs to the UPF0301 (AlgH) family.

This chain is UPF0301 protein Cgl3084/cg3414, found in Corynebacterium glutamicum (strain ATCC 13032 / DSM 20300 / JCM 1318 / BCRC 11384 / CCUG 27702 / LMG 3730 / NBRC 12168 / NCIMB 10025 / NRRL B-2784 / 534).